Here is a 2197-residue protein sequence, read N- to C-terminus: uncharacterized protein (2197 aa).

Ser-2 bears the N-acetylserine mark. The stretch at 2159 to 2195 (TIPFLAELLEDVELSVKSLAQDIIKQMEEMSGESLAE) is one HEAT repeat.

This sequence belongs to the HEATR1/UTP10 family.

It is found in the nucleus. The protein localises to the nucleolus. In terms of biological role, involved in nucleolar processing of pre-18S ribosomal RNA. Involved in ribosome biosynthesis. This is an uncharacterized protein from Arabidopsis thaliana (Mouse-ear cress).